The sequence spans 381 residues: Probable G-protein coupled receptor 34 (381 aa).

The Extracellular segment spans residues 1–61 (MRSHTITMTT…LLSTVLTTSY (61 aa)). Residues asparagine 28, asparagine 36, and asparagine 42 are each glycosylated (N-linked (GlcNAc...) asparagine). A helical membrane pass occupies residues 62–82 (SVIFIVGLVGNIIALYVFLGI). Over 83-88 (HRKRNS) the chain is Cytoplasmic. The helical transmembrane segment at 89–109 (IQIYLLNVAIADLLLIFCLPF) threads the bilayer. The Extracellular segment spans residues 110–128 (RIMYHINQNKWTLGVILCK). Cysteine 127 and cysteine 204 form a disulfide bridge. A helical transmembrane segment spans residues 129 to 149 (VVGTLFYMNMYISIILLGFIS). Over 150–171 (LDRYIKINRSIQQRKAITTKQS) the chain is Cytoplasmic. A helical membrane pass occupies residues 172 to 192 (IYVCCIVWMLALGGFLTMIIL). Over 193–216 (TLKKGGHNSTMCFHYRDKHNAKGE) the chain is Extracellular. A glycan (N-linked (GlcNAc...) asparagine) is linked at asparagine 200. Residues 217-237 (AIFNFILVVMFWLIFLLIILS) traverse the membrane as a helical segment. Topologically, residues 238 to 269 (YIKIGKNLLRISKRRSKFPNSGKYATTARNSF) are cytoplasmic. Residues 270 to 290 (IVLIIFTICFVPYHAFRFIYI) traverse the membrane as a helical segment. Residues 291–310 (SSQLNVSSCYWKEIVHKTNE) lie on the Extracellular side of the membrane. Asparagine 295 carries N-linked (GlcNAc...) asparagine glycosylation. A helical transmembrane segment spans residues 311–331 (IMLVLSSFNSCLDPVMYFLMS). The Cytoplasmic portion of the chain corresponds to 332-381 (SNIRKIMCQLLFRRFQGEPSRSESTSEFKPGYSLHDTSVAVKIQSSSKST).

The protein belongs to the G-protein coupled receptor 1 family.

The protein localises to the cell membrane. In terms of biological role, G-protein-coupled receptor of lysophosphatidylserine (LysoPS) that plays different roles in immune response. Acts a damage-sensing receptor that triggers tissue repair upon recognition of dying neutrophils. Mechanistically, apoptotic neutrophils release lysophosphatydilserine that are recognized by type 3 innate lymphoid cells (ILC3s) via GPR34, which activates downstream PI3K-AKT and RAS-ERK signaling pathways leading to STAT3 activation and IL-22 production. Plays an important role in microglial function, controlling morphology and phagocytosis. The sequence is that of Probable G-protein coupled receptor 34 (GPR34) from Gorilla gorilla gorilla (Western lowland gorilla).